Reading from the N-terminus, the 241-residue chain is UDP-2,3-diacylglucosamine hydrolase (241 aa).

Positions 8, 10, 41, 78, and 113 each coordinate Mn(2+). 78–79 (NR) contacts substrate. 5 residues coordinate substrate: Asp-121, Ser-159, Asn-163, Lys-166, and His-194. 2 residues coordinate Mn(2+): His-194 and His-196.

This sequence belongs to the LpxH family. Requires Mn(2+) as cofactor.

It is found in the cell inner membrane. It catalyses the reaction UDP-2-N,3-O-bis[(3R)-3-hydroxytetradecanoyl]-alpha-D-glucosamine + H2O = 2-N,3-O-bis[(3R)-3-hydroxytetradecanoyl]-alpha-D-glucosaminyl 1-phosphate + UMP + 2 H(+). It functions in the pathway glycolipid biosynthesis; lipid IV(A) biosynthesis; lipid IV(A) from (3R)-3-hydroxytetradecanoyl-[acyl-carrier-protein] and UDP-N-acetyl-alpha-D-glucosamine: step 4/6. Hydrolyzes the pyrophosphate bond of UDP-2,3-diacylglucosamine to yield 2,3-diacylglucosamine 1-phosphate (lipid X) and UMP by catalyzing the attack of water at the alpha-P atom. Involved in the biosynthesis of lipid A, a phosphorylated glycolipid that anchors the lipopolysaccharide to the outer membrane of the cell. This is UDP-2,3-diacylglucosamine hydrolase from Shewanella putrefaciens (strain CN-32 / ATCC BAA-453).